The sequence spans 656 residues: DNA ligase (656 aa).

NAD(+) is bound by residues 32 to 36 (DAIYD) and 81 to 82 (SL). The N6-AMP-lysine intermediate role is filled by K112. Residues R133, E167, and K306 each coordinate NAD(+). Zn(2+) is bound by residues C400, C403, C416, and C421. One can recognise a BRCT domain in the interval 577–656 (KSSSVFNNKT…ELLKRLKELD (80 aa)).

The protein belongs to the NAD-dependent DNA ligase family. LigA subfamily. Mg(2+) serves as cofactor. Requires Mn(2+) as cofactor.

The enzyme catalyses NAD(+) + (deoxyribonucleotide)n-3'-hydroxyl + 5'-phospho-(deoxyribonucleotide)m = (deoxyribonucleotide)n+m + AMP + beta-nicotinamide D-nucleotide.. Functionally, DNA ligase that catalyzes the formation of phosphodiester linkages between 5'-phosphoryl and 3'-hydroxyl groups in double-stranded DNA using NAD as a coenzyme and as the energy source for the reaction. It is essential for DNA replication and repair of damaged DNA. The polypeptide is DNA ligase (Helicobacter pylori (strain ATCC 700392 / 26695) (Campylobacter pylori)).